A 514-amino-acid polypeptide reads, in one-letter code: Maturase K (514 aa).

Belongs to the intron maturase 2 family. MatK subfamily.

It is found in the plastid. The protein localises to the chloroplast. In terms of biological role, usually encoded in the trnK tRNA gene intron. Probably assists in splicing its own and other chloroplast group II introns. In Acer palmatum (Japanese maple), this protein is Maturase K.